The sequence spans 128 residues: Small ribosomal subunit protein uS8 (128 aa).

It belongs to the universal ribosomal protein uS8 family. Part of the 30S ribosomal subunit. Contacts proteins S5 and S12.

Its function is as follows. One of the primary rRNA binding proteins, it binds directly to 16S rRNA central domain where it helps coordinate assembly of the platform of the 30S subunit. In Methylacidiphilum infernorum (isolate V4) (Methylokorus infernorum (strain V4)), this protein is Small ribosomal subunit protein uS8.